The sequence spans 1342 residues: MAYSYSEKKRIRKSFGKRPQVLNVPYLLTIQLDSYEKFIQRDSDGQQGLEAAFRSVFPIVSNNGSTELQYVSYELGEPVFDVRECQIRGTTYAAPLRVKLRLVTFDREAAAGTVKDIKEQNVYMGEIPLMTDNGTFVINGTERVIVSQLHRSPGVFFDSDKGKTHSSGKVLYNARIIPYRGSWLDFEFDPKDNLYARIDRRRKLPATIILRALGYTTEEILSMFFDKVNFEIQDNKLLMTLVPERLRGETAAFDIEANGKVYVERGRRITARHIRTLEKDGITQIEVPVEYIVGKVAAKDYVDLSTGEVVCPANMEISMEMLAKLSQAGYKEIEVLFTNDLDHGPYISETLRVDPTYDRLSALVEIYRMMRPGEPPTKEAAEALFDNMFFSADRYDLSAVGRMKFNRSLNLEEGVGSGILSNDDITGVMKKLIEIRNGRGEVDDIDHLGNRRIRSVGEMAENQFRIGLVRVERAVRERLSLGDLDGITPQDLINAKPISAAVKEFFGSSQLSQFMDQNNPLSEVTHKRRISALGPGGLTRERAGFEVRDVHTTHYGRLCPIETPEGPNIGLINSLSVYARTNNYGFLETPFRKVVNGQVTEDIEYLSAIEEGNYVIAQANSNLDENFRFTDTYVTCRGEHGESGLYKPEDIHYMDISTQQVVSVAAALIPFLEHDDANRALMGANMQRQAVPTLRADKPLVGTGMEKPIALDSGVAIVAKRGGIVQRVDASRIVVKVNEDETIPGEAGIDIYNLIKYTRSNQNTCINQIPCVNLGEPVARGEILADGPSTDLGELALGQNIRVAFMPWNGYNFEDSMLVSERVVQEDRFTTIHIQELSCVARDTKLGAEEITADIPNVGESALSKLDESGIVYVGAEVKGGDILVGKVTPKGETQLTPEEKLLRAIFGEKASDVKDSSLRVPNGTSGTVIDVQVFTRDGVEKDKRALEIEEMQLKEAKKDLTEELEILEAGLFTRVRNLLIEGGVSEAELDKVAREKWLEQTLDDEAKQNQLEQLAEQHEELRKEFERKLEIKRNKIIQGDDLAPGVLKVVKVYLAVRRQIQPGDKMAGRHGNKGVISKINPVEDMPYDENGQPVEIVLNPLGVPSRMNIGQILETHLGLAAKGIGDQINAMIKQQQSVAKLREYIQKAYDLGHGSQSVDLSTFTDEEVMRLAENLRKGLPLATPVFDGAHESEIKGLLELGGLPTSGQITLFDGRTGEKFERPVTVGYMYMLKLNHLVDDKMHARSTGSYSLVTQQPLGGKAQFGGQRFGEMEVWALEAYGAAYTLQEMLTVKSDDVNGRTKMYKNIVDGTHQMEPGMPESFNVLLKEIRALGIDMELDEE.

The protein belongs to the RNA polymerase beta chain family. As to quaternary structure, the RNAP catalytic core consists of 2 alpha, 1 beta, 1 beta' and 1 omega subunit. When a sigma factor is associated with the core the holoenzyme is formed, which can initiate transcription.

The catalysed reaction is RNA(n) + a ribonucleoside 5'-triphosphate = RNA(n+1) + diphosphate. In terms of biological role, DNA-dependent RNA polymerase catalyzes the transcription of DNA into RNA using the four ribonucleoside triphosphates as substrates. The sequence is that of DNA-directed RNA polymerase subunit beta from Actinobacillus pleuropneumoniae serotype 5b (strain L20).